The sequence spans 107 residues: SKSSTGTPPSYNQLNYNENLMRFFKSKPVTVGKEESMAVEQSYNDVELQRDPSPDQCCDYSGESGSAGNLSSGSNVQMEIITNGSNTGTGTSSGSFQPPLLTEALLN.

The tract at residues 81–107 (ITNGSNTGTGTSSGSFQPPLLTEALLN) is disordered. Residues 82-95 (TNGSNTGTGTSSGS) are compositionally biased toward low complexity.

In terms of assembly, forms a heterodimer with timeless (TIM); the complex then translocates into the nucleus. In terms of processing, phosphorylated with a circadian rhythmicity, probably by the double-time protein (dbt). Phosphorylation could be implicated in the stability of per monomer and in the formation of heterodimer per-tim.

The protein resides in the nucleus. It localises to the cytoplasm. Its subcellular location is the perinuclear region. Functionally, essential for biological clock functions. Determines the period length of circadian and ultradian rhythms; an increase in PER dosage leads to shortened circadian rhythms and a decrease leads to lengthened circadian rhythms. Essential for the circadian rhythmicity of locomotor activity, eclosion behavior, and for the rhythmic component of the male courtship song that originates in the thoracic nervous system. The biological cycle depends on the rhythmic formation and nuclear localization of the TIM-PER complex. Light induces the degradation of TIM, which promotes elimination of PER. Nuclear activity of the heterodimer coordinatively regulates PER and TIM transcription through a negative feedback loop. Behaves as a negative element in circadian transcriptional loop. Does not appear to bind DNA, suggesting indirect transcriptional inhibition. In Beris vallata (Common orange legionnaire), this protein is Period circadian protein (per).